We begin with the raw amino-acid sequence, 350 residues long: Transmembrane protein 185B (350 aa).

The next 7 helical transmembrane spans lie at 16-36 (LIYACLLLFSVLLPLRLDGII), 41-61 (WAVFAPIWLWKLLVIVGASVG), 81-101 (FKAMLIAVGIHLLLLMFEILV), 111-131 (FWLLVFMPLFFVSPVSVAACV), 168-188 (WLVVFVPLWILMSFLCLVVLY), 211-231 (VTMAISWITIVVPLLIFEVLL), and 240-260 (TFSYISIFIPLWLSLLTLMAT).

Belongs to the TMEM185 family.

It localises to the membrane. The protein is Transmembrane protein 185B (Tmem185b) of Mus musculus (Mouse).